The following is a 288-amino-acid chain: UTP--glucose-1-phosphate uridylyltransferase (288 aa).

The protein belongs to the UDPGP type 2 family.

It catalyses the reaction alpha-D-glucose 1-phosphate + UTP + H(+) = UDP-alpha-D-glucose + diphosphate. It participates in glycolipid metabolism; diglucosyl-diacylglycerol biosynthesis. Catalyzes the formation of UDP-glucose from glucose-1-phosphate and UTP. This is an intermediate step in the biosynthesis of diglucosyl-diacylglycerol (Glc2-DAG), i.e. the predominant glycolipid found in the S.aureus membrane, which is also used as a membrane anchor for lipoteichoic acid (LTA). The chain is UTP--glucose-1-phosphate uridylyltransferase (gtaB) from Staphylococcus aureus (strain MSSA476).